Reading from the N-terminus, the 262-residue chain is Pyridoxine 5'-phosphate synthase (262 aa).

N6 is a 3-amino-2-oxopropyl phosphate binding site. Position 8-9 (8-9 (DH)) interacts with 1-deoxy-D-xylulose 5-phosphate. R17 is a 3-amino-2-oxopropyl phosphate binding site. H43 acts as the Proton acceptor in catalysis. Positions 45 and 50 each coordinate 1-deoxy-D-xylulose 5-phosphate. Catalysis depends on E70, which acts as the Proton acceptor. Residue T102 coordinates 1-deoxy-D-xylulose 5-phosphate. H215 (proton donor) is an active-site residue. Residues G216 and 237-238 (GH) each bind 3-amino-2-oxopropyl phosphate.

This sequence belongs to the PNP synthase family. Homooctamer; tetramer of dimers.

Its subcellular location is the cytoplasm. It catalyses the reaction 3-amino-2-oxopropyl phosphate + 1-deoxy-D-xylulose 5-phosphate = pyridoxine 5'-phosphate + phosphate + 2 H2O + H(+). The protein operates within cofactor biosynthesis; pyridoxine 5'-phosphate biosynthesis; pyridoxine 5'-phosphate from D-erythrose 4-phosphate: step 5/5. Functionally, catalyzes the complicated ring closure reaction between the two acyclic compounds 1-deoxy-D-xylulose-5-phosphate (DXP) and 3-amino-2-oxopropyl phosphate (1-amino-acetone-3-phosphate or AAP) to form pyridoxine 5'-phosphate (PNP) and inorganic phosphate. In Helicobacter acinonychis (strain Sheeba), this protein is Pyridoxine 5'-phosphate synthase.